The primary structure comprises 178 residues: MAVFEGTYQVLGTPRFGIVISRFNDLITTKLLEGCQDCLRRHGVDPNPHGSQVDYAWVPGSFEIPLVAAQLAATRRYAAIICLGAVIRGQTPHFDYVAAEVTKGIATASMQTGVPIIYGILTTDTMQQALERAGIKSNKGWEYALNALEMANLMQTLPSAINPPTTKLSSSTRILTDG.

5-amino-6-(D-ribitylamino)uracil-binding positions include F23, 61 to 63, and 85 to 87; these read SFE and AVI. (2S)-2-hydroxy-3-oxobutyl phosphate is bound at residue 90–91; sequence QT. H93 functions as the Proton donor in the catalytic mechanism. Y118 serves as a coordination point for 5-amino-6-(D-ribitylamino)uracil. (2S)-2-hydroxy-3-oxobutyl phosphate is bound at residue R132.

This sequence belongs to the DMRL synthase family.

The enzyme catalyses (2S)-2-hydroxy-3-oxobutyl phosphate + 5-amino-6-(D-ribitylamino)uracil = 6,7-dimethyl-8-(1-D-ribityl)lumazine + phosphate + 2 H2O + H(+). The protein operates within cofactor biosynthesis; riboflavin biosynthesis; riboflavin from 2-hydroxy-3-oxobutyl phosphate and 5-amino-6-(D-ribitylamino)uracil: step 1/2. Its function is as follows. Catalyzes the formation of 6,7-dimethyl-8-ribityllumazine by condensation of 5-amino-6-(D-ribitylamino)uracil with 3,4-dihydroxy-2-butanone 4-phosphate. This is the penultimate step in the biosynthesis of riboflavin. The protein is 6,7-dimethyl-8-ribityllumazine synthase of Thermosynechococcus vestitus (strain NIES-2133 / IAM M-273 / BP-1).